The following is an 85-amino-acid chain: Large ribosomal subunit protein bL27 (85 aa).

The segment at 1–20 is disordered; that stretch reads MAHKKAGGSTRNGRDSEAKR.

The protein belongs to the bacterial ribosomal protein bL27 family.

The chain is Large ribosomal subunit protein bL27 from Cronobacter sakazakii (strain ATCC BAA-894) (Enterobacter sakazakii).